Reading from the N-terminus, the 447-residue chain is Cytochrome P450 monooxygenase aunB (447 aa).

Cys386 provides a ligand contact to heme.

The protein belongs to the cytochrome P450 family. Heme is required as a cofactor.

It carries out the reaction 2 fonsecin B + NADPH + O2 + H(+) = aurasperone B + NADP(+) + 2 H2O. It catalyses the reaction 2 rubrofusarin B + NADPH + O2 + H(+) = aurasperone A + NADP(+) + 2 H2O. Its pathway is secondary metabolite biosynthesis. In terms of biological role, cytochrome P450 monooxygenase; part of the gene cluster that mediates the biosynthesis of aurasperone B, a dimeric gamma-naphthopyrone. The first step in the biosynthesis of aurasperone B is the production of gamma-naphthopyrone precursor YWA1 by the non-reducing polyketide synthase albA, via condensation of one acetyl-CoA starter unit with 6 malonyl-CoA units. YWA1 is then methylated by aunE at position C-6 to yield foncesin which is further methylated at position C-8 by aunD to produce fonsecin B. A key enzyme in the biosynthetic pathway is the cytochrome P450 monooxygenase aunB which catalyzes the oxidative dimerization of fonsecin B to aurasperone B. AunB also catalyzes the oxidative dimerization of rubrofusarin B into aurasperone A. The sequence is that of Cytochrome P450 monooxygenase aunB from Aspergillus niger (strain ATCC MYA-4892 / CBS 513.88 / FGSC A1513).